Reading from the N-terminus, the 215-residue chain is Probable phosphoglycerate mutase GpmB (215 aa).

Substrate-binding positions include 8–15 (RHGETQWN), 21–22 (QG), Arg58, Arg60, 82–85 (ELDM), 104–105 (RR), and 151–152 (GI). His9 acts as the Tele-phosphohistidine intermediate in catalysis. Glu82 (proton donor/acceptor) is an active-site residue.

Belongs to the phosphoglycerate mutase family. GpmB subfamily.

It catalyses the reaction (2R)-2-phosphoglycerate = (2R)-3-phosphoglycerate. It functions in the pathway carbohydrate degradation; glycolysis; pyruvate from D-glyceraldehyde 3-phosphate: step 3/5. The sequence is that of Probable phosphoglycerate mutase GpmB from Klebsiella pneumoniae (strain 342).